We begin with the raw amino-acid sequence, 721 residues long: MLLPVFTLKLRHKISPRMVAIGRYDGTHPCLAAATQAGKVFIHNPHMRSQHFSTSRVFQSPLESDVSLLNINQTVSCLGAGVLNPELGYDTLLVGTQTSLLAYDIYNNSDLFYREVADGANALVLGTLGDIAPPLAIIGGNCALQGFDHEGNDLFWTVTGDNVHSLALCDFDGDGKSELLVGSEDFDIRVFKEDEIVAEMTETEIVTSLCPMYGSRFGYALSNGTVGVYDKTARYWRIKSKNHAMSIHAFDINSDGVCELITGWSNGKVDARSDRTGEVIFKDNFSSAVAGVVEGDYRMDGHVQLICCSVDGEIRGYLPGTAEMKGNLLDTSVEQGLIRELSQKKQNLLLELRNYEENTKAELSSPLNEADGQKGIIPANTKLHTALSVNLGNDAQDAHAELRISTSNDTIIRAVLIFAEGIFAGESHVVHPSTHNLSSSIRVPITPPKDVPVDLHLKTFVGYRSSTQFHVFELIRQLPRFTMYALTSPDAASEPVSFVNFIVVERAQRMVTWLNQNFLLPEDSNIQNAPFHVCFTSLRNGGQLYIKMKPSGEITVNTDDIDLAGDIIQSMASFFAIEDLQVEADFPVYFEELRKVLLKVDEYHSVHQKLSANMADNSNLIRSLLVRAEDARLMRDMKTMKTRYMELYDLNKDLLNGYKIRCNNHTELLGNLKAVNQAIQRAGRLRVGKPKNQVISACRDAIRSNNINTLFRIMRVGTAPS.

A coiled-coil region spans residues 325–369; the sequence is KGNLLDTSVEQGLIRELSQKKQNLLLELRNYEENTKAELSSPLNE.

As to quaternary structure, part of BBSome complex, that contains BBS1, BBS2, BBS4, BBS5, BBS7, BBS8/TTC8, BBS9 and BBIP10. Interacts (via C-terminus) with BBS7. Interacts (via coiled coil domain) with MKKS. Interacts with CCDC28B. Interacts with DLEC1.

The protein resides in the cell projection. Its subcellular location is the cilium membrane. The protein localises to the cytoplasm. It is found in the cytoskeleton. It localises to the microtubule organizing center. The protein resides in the centrosome. Its subcellular location is the centriolar satellite. Its function is as follows. The BBSome complex is thought to function as a coat complex required for sorting of specific membrane proteins to the primary cilia. The BBSome complex is required for ciliogenesis but is dispensable for centriolar satellite function. This ciliogenic function is mediated in part by the Rab8 GDP/GTP exchange factor, which localizes to the basal body and contacts the BBSome. Rab8(GTP) enters the primary cilium and promotes extension of the ciliary membrane. Firstly the BBSome associates with the ciliary membrane and binds to RAB3IP/Rabin8, the guanosyl exchange factor (GEF) for Rab8 and then the Rab8-GTP localizes to the cilium and promotes docking and fusion of carrier vesicles to the base of the ciliary membrane. The BBSome complex, together with the LTZL1, controls SMO ciliary trafficking and contributes to the sonic hedgehog (SHH) pathway regulation. Required for proper BBSome complex assembly and its ciliary localization. The sequence is that of BBSome complex member BBS2 (Bbs2) from Rattus norvegicus (Rat).